Here is a 314-residue protein sequence, read N- to C-terminus: BTB/POZ domain-containing adapter for CUL3-mediated RhoA degradation protein 2 (314 aa).

The BTB domain occupies 32–100; the sequence is KYVRLNVGGS…LRDDTIALPK (69 aa).

This sequence belongs to the BACURD family. In terms of assembly, component of the BCR(TNFAIP1) E3 ubiquitin ligase complex, at least composed of CUL3, TNFAIP1/BACURD2 and RBX1.

Its subcellular location is the cytoplasm. The protein resides in the nucleus. It is found in the endosome. It participates in protein modification; protein ubiquitination. Its function is as follows. Substrate-specific adapter of a BCR (BTB-CUL3-RBX1) E3 ubiquitin-protein ligase complex involved in regulation of cytoskeleton structure. The BCR(TNFAIP1) E3 ubiquitin ligase complex mediates the ubiquitination of target proteins, leading to their degradation by the proteasome. The chain is BTB/POZ domain-containing adapter for CUL3-mediated RhoA degradation protein 2 (TNFAIP1) from Gallus gallus (Chicken).